We begin with the raw amino-acid sequence, 271 residues long: Phosphoribosylformylglycinamidine synthase subunit PurQ (271 aa).

Residues lysine 7 to glycine 253 form the Glutamine amidotransferase type-1 domain. Cysteine 104 acts as the Nucleophile in catalysis. Residues histidine 238 and glutamate 240 contribute to the active site.

As to quaternary structure, part of the FGAM synthase complex composed of 1 PurL, 1 PurQ and 2 PurS subunits.

The protein resides in the cytoplasm. The catalysed reaction is N(2)-formyl-N(1)-(5-phospho-beta-D-ribosyl)glycinamide + L-glutamine + ATP + H2O = 2-formamido-N(1)-(5-O-phospho-beta-D-ribosyl)acetamidine + L-glutamate + ADP + phosphate + H(+). The enzyme catalyses L-glutamine + H2O = L-glutamate + NH4(+). It participates in purine metabolism; IMP biosynthesis via de novo pathway; 5-amino-1-(5-phospho-D-ribosyl)imidazole from N(2)-formyl-N(1)-(5-phospho-D-ribosyl)glycinamide: step 1/2. Its function is as follows. Part of the phosphoribosylformylglycinamidine synthase complex involved in the purines biosynthetic pathway. Catalyzes the ATP-dependent conversion of formylglycinamide ribonucleotide (FGAR) and glutamine to yield formylglycinamidine ribonucleotide (FGAM) and glutamate. The FGAM synthase complex is composed of three subunits. PurQ produces an ammonia molecule by converting glutamine to glutamate. PurL transfers the ammonia molecule to FGAR to form FGAM in an ATP-dependent manner. PurS interacts with PurQ and PurL and is thought to assist in the transfer of the ammonia molecule from PurQ to PurL. The polypeptide is Phosphoribosylformylglycinamidine synthase subunit PurQ (Archaeoglobus fulgidus (strain ATCC 49558 / DSM 4304 / JCM 9628 / NBRC 100126 / VC-16)).